Here is a 162-residue protein sequence, read N- to C-terminus: Regulator of ribonuclease activity A (162 aa).

Belongs to the RraA family. Homotrimer. Binds to both RNA-binding sites in the C-terminal region of Rne and to RhlB.

Its subcellular location is the cytoplasm. In terms of biological role, globally modulates RNA abundance by binding to RNase E (Rne) and regulating its endonucleolytic activity. Can modulate Rne action in a substrate-dependent manner by altering the composition of the degradosome. Modulates RNA-binding and helicase activities of the degradosome. This is Regulator of ribonuclease activity A from Haemophilus influenzae (strain ATCC 51907 / DSM 11121 / KW20 / Rd).